A 303-amino-acid chain; its full sequence is tRNA dimethylallyltransferase (303 aa).

An ATP-binding site is contributed by 11 to 18 (GPTGVGKS). 13-18 (TGVGKS) lines the substrate pocket. 2 interaction with substrate tRNA regions span residues 36 to 39 (DSRQ) and 159 to 163 (QRVLR).

The protein belongs to the IPP transferase family. Monomer. It depends on Mg(2+) as a cofactor.

It catalyses the reaction adenosine(37) in tRNA + dimethylallyl diphosphate = N(6)-dimethylallyladenosine(37) in tRNA + diphosphate. Functionally, catalyzes the transfer of a dimethylallyl group onto the adenine at position 37 in tRNAs that read codons beginning with uridine, leading to the formation of N6-(dimethylallyl)adenosine (i(6)A). The chain is tRNA dimethylallyltransferase from Lawsonia intracellularis (strain PHE/MN1-00).